Reading from the N-terminus, the 421-residue chain is 4-hydroxy-3-methylbut-2-en-1-yl diphosphate synthase (flavodoxin) (421 aa).

Residues Cys-311, Cys-314, Cys-357, and Glu-364 each coordinate [4Fe-4S] cluster.

It belongs to the IspG family. [4Fe-4S] cluster is required as a cofactor.

The catalysed reaction is (2E)-4-hydroxy-3-methylbut-2-enyl diphosphate + oxidized [flavodoxin] + H2O + 2 H(+) = 2-C-methyl-D-erythritol 2,4-cyclic diphosphate + reduced [flavodoxin]. It participates in isoprenoid biosynthesis; isopentenyl diphosphate biosynthesis via DXP pathway; isopentenyl diphosphate from 1-deoxy-D-xylulose 5-phosphate: step 5/6. Converts 2C-methyl-D-erythritol 2,4-cyclodiphosphate (ME-2,4cPP) into 1-hydroxy-2-methyl-2-(E)-butenyl 4-diphosphate. This chain is 4-hydroxy-3-methylbut-2-en-1-yl diphosphate synthase (flavodoxin), found in Xanthomonas axonopodis pv. citri (strain 306).